Here is a 43-residue protein sequence, read N- to C-terminus: Hainantoxin F5-22.36 (43 aa).

Cystine bridges form between cysteine 1/cysteine 19, cysteine 8/cysteine 24, and cysteine 18/cysteine 38.

It belongs to the neurotoxin 14 (magi-1) family. 02 (HWTX-XVIc) subfamily. Expressed by the venom gland.

The protein resides in the secreted. In terms of biological role, probable ion channel inhibitor. The polypeptide is Hainantoxin F5-22.36 (Cyriopagopus hainanus (Chinese bird spider)).